The sequence spans 71 residues: DNA gyrase inhibitor YacG (71 aa).

Residues cysteine 8, cysteine 11, cysteine 27, and cysteine 31 each contribute to the Zn(2+) site. The interval 48 to 71 is disordered; that stretch reads VVEDDDLPPDAPGGESGGASGRLN. The segment covering 61–71 has biased composition (gly residues); that stretch reads GESGGASGRLN.

The protein belongs to the DNA gyrase inhibitor YacG family. Interacts with GyrB. Zn(2+) is required as a cofactor.

Functionally, inhibits all the catalytic activities of DNA gyrase by preventing its interaction with DNA. Acts by binding directly to the C-terminal domain of GyrB, which probably disrupts DNA binding by the gyrase. This Ralstonia nicotianae (strain ATCC BAA-1114 / GMI1000) (Ralstonia solanacearum) protein is DNA gyrase inhibitor YacG.